A 486-amino-acid polypeptide reads, in one-letter code: Cysteine--tRNA ligase (486 aa).

Cys29 contributes to the Zn(2+) binding site. A 'HIGH' region motif is present at residues 31–41 (VTVYDYCHLGH). Residues Cys217, His242, and Glu246 each contribute to the Zn(2+) site. The 'KMSKS' region signature appears at 274–278 (KMSKS). Position 277 (Lys277) interacts with ATP.

This sequence belongs to the class-I aminoacyl-tRNA synthetase family. In terms of assembly, monomer. Zn(2+) is required as a cofactor.

It localises to the cytoplasm. The catalysed reaction is tRNA(Cys) + L-cysteine + ATP = L-cysteinyl-tRNA(Cys) + AMP + diphosphate. The sequence is that of Cysteine--tRNA ligase from Thermosynechococcus vestitus (strain NIES-2133 / IAM M-273 / BP-1).